The following is a 201-amino-acid chain: Urease accessory protein UreG (201 aa).

11-18 is a binding site for GTP; that stretch reads GPVGSGKT.

This sequence belongs to the SIMIBI class G3E GTPase family. UreG subfamily. In terms of assembly, homodimer. UreD, UreF and UreG form a complex that acts as a GTP-hydrolysis-dependent molecular chaperone, activating the urease apoprotein by helping to assemble the nickel containing metallocenter of UreC. The UreE protein probably delivers the nickel.

It localises to the cytoplasm. Facilitates the functional incorporation of the urease nickel metallocenter. This process requires GTP hydrolysis, probably effectuated by UreG. This Synechococcus sp. (strain CC9605) protein is Urease accessory protein UreG.